Here is a 285-residue protein sequence, read N- to C-terminus: Nucleotide-binding protein CD630_34000 (285 aa).

8 to 15 is a binding site for ATP; that stretch reads GLSGSGKS. 59-62 provides a ligand contact to GTP; sequence DIRG.

It belongs to the RapZ-like family.

In terms of biological role, displays ATPase and GTPase activities. This is Nucleotide-binding protein CD630_34000 from Clostridioides difficile (strain 630) (Peptoclostridium difficile).